The following is a 160-amino-acid chain: Nucleotide-binding protein CBU_0114 (160 aa).

Belongs to the YajQ family.

In terms of biological role, nucleotide-binding protein. This is Nucleotide-binding protein CBU_0114 from Coxiella burnetii (strain RSA 493 / Nine Mile phase I).